The following is a 343-amino-acid chain: UDP-glucuronic acid decarboxylase 6 (343 aa).

The disordered stretch occupies residues Met1–Arg22. At Ala2 the chain carries N-acetylalanine. Asp62–Asp87 serves as a coordination point for NAD(+). Arg171 is a substrate binding site. Tyr174 (proton acceptor) is an active-site residue. Residue Tyr174 to Lys178 coordinates NAD(+). Residue Asn203 coordinates substrate. An NAD(+)-binding site is contributed by Arg215. Substrate is bound by residues Val216–Phe220, Gln233–Arg240, and Asp300–Arg304.

This sequence belongs to the NAD(P)-dependent epimerase/dehydratase family. UDP-glucuronic acid decarboxylase subfamily. The cofactor is NAD(+).

It localises to the cytoplasm. It catalyses the reaction UDP-alpha-D-glucuronate + H(+) = UDP-alpha-D-xylose + CO2. It participates in nucleotide-sugar biosynthesis; UDP-alpha-D-xylose biosynthesis; UDP-alpha-D-xylose from UDP-alpha-D-glucuronate: step 1/1. In terms of biological role, catalyzes the NAD-dependent decarboxylation of UDP-glucuronic acid to UDP-xylose. Necessary for the biosynthesis of the core tetrasaccharide in glycosaminoglycan biosynthesis. The chain is UDP-glucuronic acid decarboxylase 6 (UXS6) from Arabidopsis thaliana (Mouse-ear cress).